A 248-amino-acid polypeptide reads, in one-letter code: Probable aquaporin TIP2-1 (248 aa).

Helical transmembrane passes span 20–40 (AYVA…GSAI) and 54–74 (AGLV…VSVA). The NPA 1 motif lies at 83–85 (NPA). 3 helical membrane passes run 97 to 119 (TILT…CLLL), 141 to 161 (GVVM…ATAA), and 168 to 188 (LGTI…LAAG). The short motif at 196–198 (NPA) is the NPA 2 element. A helical transmembrane segment spans residues 217–237 (WVGPLIGGGLAGLVYGDVFIG).

It belongs to the MIP/aquaporin (TC 1.A.8) family. TIP (TC 1.A.8.10) subfamily. In terms of tissue distribution, expressed in roots and anthers.

It localises to the vacuole membrane. Functionally, aquaporins facilitate the transport of water and small neutral solutes across cell membranes. May be involved in transport from the vacuolar compartment to the cytoplasm. The sequence is that of Probable aquaporin TIP2-1 (TIP2-1) from Oryza sativa subsp. japonica (Rice).